Consider the following 569-residue polypeptide: Urease subunit alpha (569 aa).

The Urease domain maps to 131 to 569 (GGIDSHIHFI…LPLAQRYFLF (439 aa)). Residues His-136, His-138, and Lys-219 each contribute to the Ni(2+) site. At Lys-219 the chain carries N6-carboxylysine. His-221 lines the substrate pocket. 2 residues coordinate Ni(2+): His-248 and His-274. The Proton donor role is filled by His-322. Position 362 (Asp-362) interacts with Ni(2+).

It belongs to the metallo-dependent hydrolases superfamily. Urease alpha subunit family. In terms of assembly, heterotrimer of UreA (gamma), UreB (beta) and UreC (alpha) subunits. Three heterotrimers associate to form the active enzyme. The cofactor is Ni cation. Post-translationally, carboxylation allows a single lysine to coordinate two nickel ions.

Its subcellular location is the cytoplasm. The enzyme catalyses urea + 2 H2O + H(+) = hydrogencarbonate + 2 NH4(+). Its pathway is nitrogen metabolism; urea degradation; CO(2) and NH(3) from urea (urease route): step 1/1. This Herpetosiphon aurantiacus (strain ATCC 23779 / DSM 785 / 114-95) protein is Urease subunit alpha.